We begin with the raw amino-acid sequence, 479 residues long: Cardiolipin synthase A (479 aa).

2 consecutive transmembrane segments (helical) span residues 8–28 and 38–58; these read FFGYLLGLIHLLGIVAALHAV and IAWAMPLFFIPYLTLIPYLVF. PLD phosphodiesterase domains follow at residues 218–245 and 392–419; these read VNFRNHRKIVVVDGLVGFIGGHNVGDEY and QPGFLHQKVVLVDDDVSAIGSANLDNRS. Catalysis depends on residues His-223, Lys-225, Asp-230, His-397, Lys-399, and Asp-404.

It belongs to the phospholipase D family. Cardiolipin synthase subfamily. ClsA sub-subfamily.

It localises to the cell inner membrane. It catalyses the reaction 2 a 1,2-diacyl-sn-glycero-3-phospho-(1'-sn-glycerol) = a cardiolipin + glycerol. Functionally, catalyzes the reversible phosphatidyl group transfer from one phosphatidylglycerol molecule to another to form cardiolipin (CL) (diphosphatidylglycerol) and glycerol. This Pseudomonas putida (strain GB-1) protein is Cardiolipin synthase A.